An 874-amino-acid polypeptide reads, in one-letter code: Alanine--tRNA ligase (874 aa).

Residues His-564, His-568, Cys-665, and His-669 each coordinate Zn(2+).

This sequence belongs to the class-II aminoacyl-tRNA synthetase family. Zn(2+) is required as a cofactor.

It is found in the cytoplasm. It catalyses the reaction tRNA(Ala) + L-alanine + ATP = L-alanyl-tRNA(Ala) + AMP + diphosphate. Functionally, catalyzes the attachment of alanine to tRNA(Ala) in a two-step reaction: alanine is first activated by ATP to form Ala-AMP and then transferred to the acceptor end of tRNA(Ala). Also edits incorrectly charged Ser-tRNA(Ala) and Gly-tRNA(Ala) via its editing domain. The chain is Alanine--tRNA ligase from Burkholderia vietnamiensis (strain G4 / LMG 22486) (Burkholderia cepacia (strain R1808)).